The chain runs to 153 residues: UPF0179 protein AF_2154 (153 aa).

It belongs to the UPF0179 family.

The protein is UPF0179 protein AF_2154 of Archaeoglobus fulgidus (strain ATCC 49558 / DSM 4304 / JCM 9628 / NBRC 100126 / VC-16).